The sequence spans 363 residues: Chorismate synthase (363 aa).

Arg-48 serves as a coordination point for NADP(+). Residues 125–127 (RSS), 238–239 (NA), Gly-278, 293–297 (KPTAS), and Arg-319 contribute to the FMN site.

Belongs to the chorismate synthase family. In terms of assembly, homotetramer. FMNH2 is required as a cofactor.

The catalysed reaction is 5-O-(1-carboxyvinyl)-3-phosphoshikimate = chorismate + phosphate. The protein operates within metabolic intermediate biosynthesis; chorismate biosynthesis; chorismate from D-erythrose 4-phosphate and phosphoenolpyruvate: step 7/7. In terms of biological role, catalyzes the anti-1,4-elimination of the C-3 phosphate and the C-6 proR hydrogen from 5-enolpyruvylshikimate-3-phosphate (EPSP) to yield chorismate, which is the branch point compound that serves as the starting substrate for the three terminal pathways of aromatic amino acid biosynthesis. This reaction introduces a second double bond into the aromatic ring system. The polypeptide is Chorismate synthase (Acinetobacter baumannii (strain SDF)).